The sequence spans 877 residues: Probable alpha/beta-glucosidase agdC (877 aa).

An N-terminal signal peptide occupies residues M1–A14. N171, N293, and N373 each carry an N-linked (GlcNAc...) asparagine glycan. D422 (nucleophile) is an active-site residue. E425 is an active-site residue. The disordered stretch occupies residues D432–S476. Residues P447–G463 are compositionally biased toward pro residues. N-linked (GlcNAc...) asparagine glycosylation is present at N508. D573 functions as the Proton donor in the catalytic mechanism. 3 N-linked (GlcNAc...) asparagine glycosylation sites follow: N574, N610, and N744.

It belongs to the glycosyl hydrolase 31 family.

Its subcellular location is the secreted. It carries out the reaction Hydrolysis of terminal, non-reducing (1-&gt;4)-linked alpha-D-glucose residues with release of alpha-D-glucose.. The enzyme catalyses Hydrolysis of terminal, non-reducing beta-D-glucosyl residues with release of beta-D-glucose.. Functionally, glucosidase involved in the degradation of cellulosic biomass. Has both alpha- and beta-glucosidase activity. The protein is Probable alpha/beta-glucosidase agdC (agdC) of Aspergillus flavus (strain ATCC 200026 / FGSC A1120 / IAM 13836 / NRRL 3357 / JCM 12722 / SRRC 167).